Reading from the N-terminus, the 452-residue chain is NADH-ubiquinone oxidoreductase chain 4 (452 aa).

Helical transmembrane passes span L4–W24, V29–S49, F59–S79, L88–M110, L114–G136, A144–I164, V182–V202, P221–M241, M252–I272, L282–W304, A309–Y331, L345–A365, I390–M410, and L432–F452.

It belongs to the complex I subunit 4 family.

The protein resides in the mitochondrion membrane. It carries out the reaction a ubiquinone + NADH + 5 H(+)(in) = a ubiquinol + NAD(+) + 4 H(+)(out). Functionally, core subunit of the mitochondrial membrane respiratory chain NADH dehydrogenase (Complex I) that is believed to belong to the minimal assembly required for catalysis. Complex I functions in the transfer of electrons from NADH to the respiratory chain. The immediate electron acceptor for the enzyme is believed to be ubiquinone. The sequence is that of NADH-ubiquinone oxidoreductase chain 4 (ND4) from Branchiostoma lanceolatum (Common lancelet).